Reading from the N-terminus, the 395-residue chain is S-adenosylmethionine synthase (395 aa).

His16 is an ATP binding site. Asp18 contributes to the Mg(2+) binding site. Glu44 is a binding site for K(+). The L-methionine site is built by Glu57 and Gln100. The tract at residues Gln100 to Asp110 is flexible loop. ATP is bound by residues Asp174 to Lys176, Arg241 to Phe242, Asp250, Arg256 to Lys257, Ala273, and Lys277. Asp250 serves as a coordination point for L-methionine. Residue Lys281 participates in L-methionine binding.

This sequence belongs to the AdoMet synthase family. Homotetramer; dimer of dimers. Mg(2+) is required as a cofactor. K(+) serves as cofactor.

The protein resides in the cytoplasm. It carries out the reaction L-methionine + ATP + H2O = S-adenosyl-L-methionine + phosphate + diphosphate. It participates in amino-acid biosynthesis; S-adenosyl-L-methionine biosynthesis; S-adenosyl-L-methionine from L-methionine: step 1/1. Catalyzes the formation of S-adenosylmethionine (AdoMet) from methionine and ATP. The overall synthetic reaction is composed of two sequential steps, AdoMet formation and the subsequent tripolyphosphate hydrolysis which occurs prior to release of AdoMet from the enzyme. In Levilactobacillus brevis (strain ATCC 367 / BCRC 12310 / CIP 105137 / JCM 1170 / LMG 11437 / NCIMB 947 / NCTC 947) (Lactobacillus brevis), this protein is S-adenosylmethionine synthase.